Here is a 531-residue protein sequence, read N- to C-terminus: tRNA-2-methylthio-N(6)-dimethylallyladenosine synthase (531 aa).

Residues 1-26 form a disordered region; sequence MNEKQRLEQTGQIKTESHPADRKSAL. Positions 15 to 26 are enriched in basic and acidic residues; the sequence is TESHPADRKSAL. The 119-residue stretch at 80 to 198 folds into the MTTase N-terminal domain; sequence RKFYIRTYGC…LPYILHEAYM (119 aa). [4Fe-4S] cluster contacts are provided by Cys-89, Cys-125, Cys-159, Cys-235, Cys-239, and Cys-242. The Radical SAM core domain maps to 221 to 451; it reads RKGKIKAWVN…NDLVQEIAAK (231 aa). One can recognise a TRAM domain in the interval 454–517; that stretch reads KQYEGQVVEV…TWTLTGELVN (64 aa).

It belongs to the methylthiotransferase family. MiaB subfamily. In terms of assembly, monomer. The cofactor is [4Fe-4S] cluster.

Its subcellular location is the cytoplasm. It carries out the reaction N(6)-dimethylallyladenosine(37) in tRNA + (sulfur carrier)-SH + AH2 + 2 S-adenosyl-L-methionine = 2-methylsulfanyl-N(6)-dimethylallyladenosine(37) in tRNA + (sulfur carrier)-H + 5'-deoxyadenosine + L-methionine + A + S-adenosyl-L-homocysteine + 2 H(+). Catalyzes the methylthiolation of N6-(dimethylallyl)adenosine (i(6)A), leading to the formation of 2-methylthio-N6-(dimethylallyl)adenosine (ms(2)i(6)A) at position 37 in tRNAs that read codons beginning with uridine. This chain is tRNA-2-methylthio-N(6)-dimethylallyladenosine synthase, found in Geobacillus kaustophilus (strain HTA426).